The primary structure comprises 741 residues: Condensin complex subunit 2 (741 aa).

Residues 1-67 (MGPPGPALPA…NDDEKERLQR (67 aa)) form a disordered region. A phosphoserine mark is found at Ser15, Ser25, and Ser28. At Thr49 the chain carries Phosphothreonine. Phosphoserine is present on residues Ser70, Ser78, Ser81, Ser87, Ser89, Ser92, Ser96, Ser201, and Ser233. The segment covering 361–377 (CGDFPDGSLGDDFDAND) has biased composition (acidic residues). The disordered stretch occupies residues 361–383 (CGDFPDGSLGDDFDANDEPDHTA). A Phosphoserine modification is found at Ser432. The tract at residues 447–467 (FRPRRKQDAPSQSENKKKSTK) is disordered. Residue Lys488 forms a Glycyl lysine isopeptide (Lys-Gly) (interchain with G-Cter in SUMO2) linkage. Ser496 carries the phosphoserine modification. Thr598 and Thr605 each carry phosphothreonine. Lys637 bears the N6-acetyllysine mark.

Belongs to the CND2 (condensin subunit 2) family. As to quaternary structure, component of the condensin complex, which contains the SMC2 and SMC4 heterodimer, and three non SMC subunits that probably regulate the complex: NCAPH/BRRN1, NCAPD2/CAPD2 and NCAPG. Phosphorylated by CDK1. Its phosphorylation, as well as that of NCAPD2 and NCAPG subunits, activates the condensin complex and is required for chromosome condensation. Widely expressed at low level. Expressed in proliferating cells.

The protein localises to the nucleus. It is found in the cytoplasm. Its subcellular location is the chromosome. Functionally, regulatory subunit of the condensin complex, a complex required for conversion of interphase chromatin into mitotic-like condense chromosomes. The condensin complex probably introduces positive supercoils into relaxed DNA in the presence of type I topoisomerases and converts nicked DNA into positive knotted forms in the presence of type II topoisomerases. Early in neurogenesis, may play an essential role to ensure accurate mitotic chromosome condensation in neuron stem cells, ultimately affecting neuron pool and cortex size. The polypeptide is Condensin complex subunit 2 (Homo sapiens (Human)).